The sequence spans 170 residues: uncharacterized protein (170 aa).

A run of 5 helical transmembrane segments spans residues 21 to 41 (NISL…AAVL), 55 to 75 (AYTS…TLLL), 86 to 106 (TGIA…YWLW), 117 to 137 (ISGV…VSLL), and 143 to 163 (FSAA…TLLP). An EamA domain is found at 35 to 161 (IIFAAVLRWT…IMLATLGSTL (127 aa)).

This sequence belongs to the EamA transporter family.

It is found in the cell membrane. This is an uncharacterized protein from Haemophilus influenzae (strain ATCC 51907 / DSM 11121 / KW20 / Rd).